Reading from the N-terminus, the 391-residue chain is Probable sugar efflux transporter (391 aa).

The next 12 membrane-spanning stretches (helical) occupy residues 16–36, 51–71, 82–102, 110–130, 138–158, 170–190, 210–230, 247–267, 277–297, 300–320, 338–358, and 361–381; these read VFVF…PVAL, VGLM…PLML, LLFL…AWNF, MGIA…VIRV, QALG…LPLG, TFGV…KLLP, PLLM…FTTY, ITTL…FLFS, FIAF…VFKN, WVIF…TIAL, IFSG…SIVI, and LGLE…LFWL.

This sequence belongs to the major facilitator superfamily. SotB (TC 2.A.1.2) family.

The protein resides in the cell inner membrane. Its function is as follows. Involved in the efflux of sugars. The physiological role may be the reduction of the intracellular concentration of toxic sugars or sugar metabolites. The protein is Probable sugar efflux transporter of Helicobacter pylori (strain HPAG1).